Consider the following 325-residue polypeptide: tRNA(Ile)-lysidine synthase (325 aa).

34-39 lines the ATP pocket; sequence SGGADS.

The protein belongs to the tRNA(Ile)-lysidine synthase family.

Its subcellular location is the cytoplasm. The enzyme catalyses cytidine(34) in tRNA(Ile2) + L-lysine + ATP = lysidine(34) in tRNA(Ile2) + AMP + diphosphate + H(+). In terms of biological role, ligates lysine onto the cytidine present at position 34 of the AUA codon-specific tRNA(Ile) that contains the anticodon CAU, in an ATP-dependent manner. Cytidine is converted to lysidine, thus changing the amino acid specificity of the tRNA from methionine to isoleucine. The protein is tRNA(Ile)-lysidine synthase of Rhodococcus erythropolis (strain PR4 / NBRC 100887).